A 478-amino-acid chain; its full sequence is ATP-dependent RNA helicase DDX19A (478 aa).

Ala2 carries the post-translational modification N-acetylalanine. Residues 2 to 299 (ATDSWALAVD…DPNIIKLKRE (298 aa)) are N-terminal lobe. Residue Lys26 forms a Glycyl lysine isopeptide (Lys-Gly) (interchain with G-Cter in SUMO1); alternate linkage. A Glycyl lysine isopeptide (Lys-Gly) (interchain with G-Cter in SUMO2); alternate cross-link involves residue Lys26. Positions 31–55 (KPDTNGVIKTNATPEKTDEEEKEDR) are disordered. Residues 54–67 (DRAAQSLLNKLIRS) are N-terminal helix. A Q motif motif is present at residues 91-119 (KSFEELRLKPQLLQGVYAMGFNRPSKIQE). ATP contacts are provided by residues Gln118 and 137–144 (SQSGTGKT). In terms of domain architecture, Helicase ATP-binding spans 124-294 (MMLAEPPQNL…QKVVPDPNII (171 aa)). The short motif at 241–244 (DEAD) is the DEAD box element. The tract at residues 300-478 (EETLDTIKQY…DLDEIEKIAN (179 aa)) is C-terminal lobe. Positions 305-473 (TIKQYYVLCN…RLDTDDLDEI (169 aa)) constitute a Helicase C-terminal domain. Arg428 and Arg431 together coordinate ATP.

It belongs to the DEAD box helicase family. DDX19/DBP5 subfamily.

The protein resides in the cytoplasm. The protein localises to the nucleus. Its subcellular location is the nucleoplasm. The catalysed reaction is ATP + H2O = ADP + phosphate + H(+). Its function is as follows. ATP-dependent RNA helicase involved in mRNA export from the nucleus. Rather than unwinding RNA duplexes, DDX19 functions as a remodeler of ribonucleoprotein particles, whereby proteins bound to nuclear mRNA are dissociated and replaced by cytoplasmic mRNA binding proteins. This chain is ATP-dependent RNA helicase DDX19A (DDX19A), found in Bos taurus (Bovine).